Consider the following 471-residue polypeptide: Ribulose bisphosphate carboxylase large chain (471 aa).

N6,N6,N6-trimethyllysine is present on lysine 5. Residues asparagine 114 and threonine 164 each contribute to the substrate site. Lysine 166 serves as the catalytic Proton acceptor. A substrate-binding site is contributed by lysine 168. Lysine 192, aspartate 194, and glutamate 195 together coordinate Mg(2+). Lysine 192 carries the post-translational modification N6-carboxylysine. The Proton acceptor role is filled by histidine 285. Substrate is bound by residues arginine 286, histidine 318, and serine 370.

Belongs to the RuBisCO large chain family. Type I subfamily. As to quaternary structure, heterohexadecamer of 8 large chains and 8 small chains; disulfide-linked. The disulfide link is formed within the large subunit homodimers. Mg(2+) serves as cofactor. In terms of processing, the disulfide bond which can form in the large chain dimeric partners within the hexadecamer appears to be associated with oxidative stress and protein turnover.

Its subcellular location is the plastid. The protein resides in the chloroplast. It catalyses the reaction 2 (2R)-3-phosphoglycerate + 2 H(+) = D-ribulose 1,5-bisphosphate + CO2 + H2O. The enzyme catalyses D-ribulose 1,5-bisphosphate + O2 = 2-phosphoglycolate + (2R)-3-phosphoglycerate + 2 H(+). In terms of biological role, ruBisCO catalyzes two reactions: the carboxylation of D-ribulose 1,5-bisphosphate, the primary event in carbon dioxide fixation, as well as the oxidative fragmentation of the pentose substrate in the photorespiration process. Both reactions occur simultaneously and in competition at the same active site. The polypeptide is Ribulose bisphosphate carboxylase large chain (Anthocleista grandiflora (Forest fever tree)).